The chain runs to 332 residues: Phosphate acyltransferase (332 aa).

Belongs to the PlsX family. In terms of assembly, homodimer. Probably interacts with PlsY.

Its subcellular location is the cytoplasm. It catalyses the reaction a fatty acyl-[ACP] + phosphate = an acyl phosphate + holo-[ACP]. It functions in the pathway lipid metabolism; phospholipid metabolism. Its function is as follows. Catalyzes the reversible formation of acyl-phosphate (acyl-PO(4)) from acyl-[acyl-carrier-protein] (acyl-ACP). This enzyme utilizes acyl-ACP as fatty acyl donor, but not acyl-CoA. This chain is Phosphate acyltransferase, found in Bacillus pumilus (strain SAFR-032).